The chain runs to 166 residues: Small ribosomal subunit protein uS5 (166 aa).

The 64-residue stretch at 11 to 74 (LQEKLVAVNR…EQARRNMVKV (64 aa)) folds into the S5 DRBM domain.

The protein belongs to the universal ribosomal protein uS5 family. In terms of assembly, part of the 30S ribosomal subunit. Contacts proteins S4 and S8.

In terms of biological role, with S4 and S12 plays an important role in translational accuracy. Its function is as follows. Located at the back of the 30S subunit body where it stabilizes the conformation of the head with respect to the body. The sequence is that of Small ribosomal subunit protein uS5 from Tolumonas auensis (strain DSM 9187 / NBRC 110442 / TA 4).